A 543-amino-acid polypeptide reads, in one-letter code: Hydroxylamine reductase (543 aa).

Cysteine 5, cysteine 8, cysteine 17, and cysteine 23 together coordinate [4Fe-4S] cluster. The hybrid [4Fe-2O-2S] cluster site is built by histidine 236, glutamate 260, cysteine 304, cysteine 398, cysteine 426, cysteine 451, glutamate 486, and lysine 488. Cysteine 398 bears the Cysteine persulfide mark.

Belongs to the HCP family. Requires [4Fe-4S] cluster as cofactor. It depends on hybrid [4Fe-2O-2S] cluster as a cofactor.

It is found in the cytoplasm. It carries out the reaction A + NH4(+) + H2O = hydroxylamine + AH2 + H(+). Its function is as follows. Catalyzes the reduction of hydroxylamine to form NH(3) and H(2)O. The polypeptide is Hydroxylamine reductase (Bacteroides fragilis (strain YCH46)).